A 137-amino-acid chain; its full sequence is Protein FrxA (137 aa).

In Pyrococcus furiosus (strain ATCC 43587 / DSM 3638 / JCM 8422 / Vc1), this protein is Protein FrxA (frxA).